A 435-amino-acid polypeptide reads, in one-letter code: ATP-dependent RNA helicase RhlB (435 aa).

The Q motif signature appears at Q9–A37. The 180-residue stretch at L40–V219 folds into the Helicase ATP-binding domain. A53–T60 is an ATP binding site. The DEAD box signature appears at D165–D168. One can recognise a Helicase C-terminal domain in the interval A245–I390. The segment at A395–A435 is disordered. Residues S401 to G413 show a composition bias toward polar residues. Residues N422–A435 are compositionally biased toward basic residues.

This sequence belongs to the DEAD box helicase family. RhlB subfamily. Component of the RNA degradosome, which is a multiprotein complex involved in RNA processing and mRNA degradation.

Its subcellular location is the cytoplasm. The enzyme catalyses ATP + H2O = ADP + phosphate + H(+). In terms of biological role, DEAD-box RNA helicase involved in RNA degradation. Has RNA-dependent ATPase activity and unwinds double-stranded RNA. The protein is ATP-dependent RNA helicase RhlB of Vibrio vulnificus (strain YJ016).